A 400-amino-acid polypeptide reads, in one-letter code: Lysophospholipid transporter LplT (400 aa).

12 helical membrane passes run 19 to 39 (VIVA…ATLA), 53 to 73 (VLQM…GQMA), 91 to 111 (AGAA…LVGI), 139 to 159 (LMEA…GVLA), 164 to 184 (IAAL…NLFI), 195 to 213 (SWRL…VVLW), 227 to 247 (LFWG…PVAL), 257 to 277 (YLNA…AKLV), 281 to 301 (TVSR…IFSL), 304 to 324 (ALLP…FFVV), 352 to 372 (NSAM…GVPA), and 373 to 393 (VAIG…LWIW).

Belongs to the major facilitator superfamily. LplT (TC 2.A.1.42) family.

The protein resides in the cell inner membrane. Catalyzes the facilitated diffusion of 2-acyl-glycero-3-phosphoethanolamine (2-acyl-GPE) into the cell. The sequence is that of Lysophospholipid transporter LplT from Salmonella enteritidis PT4 (strain P125109).